Consider the following 425-residue polypeptide: Serine--tRNA ligase (425 aa).

An L-serine-binding site is contributed by 228–230 (TAE). An ATP-binding site is contributed by 259–261 (RSE). L-serine is bound at residue glutamate 282. An ATP-binding site is contributed by 346–349 (EIAS). Residue serine 382 coordinates L-serine.

The protein belongs to the class-II aminoacyl-tRNA synthetase family. Type-1 seryl-tRNA synthetase subfamily. As to quaternary structure, homodimer. The tRNA molecule binds across the dimer.

The protein localises to the cytoplasm. It carries out the reaction tRNA(Ser) + L-serine + ATP = L-seryl-tRNA(Ser) + AMP + diphosphate + H(+). The enzyme catalyses tRNA(Sec) + L-serine + ATP = L-seryl-tRNA(Sec) + AMP + diphosphate + H(+). It functions in the pathway aminoacyl-tRNA biosynthesis; selenocysteinyl-tRNA(Sec) biosynthesis; L-seryl-tRNA(Sec) from L-serine and tRNA(Sec): step 1/1. Functionally, catalyzes the attachment of serine to tRNA(Ser). Is also able to aminoacylate tRNA(Sec) with serine, to form the misacylated tRNA L-seryl-tRNA(Sec), which will be further converted into selenocysteinyl-tRNA(Sec). In Rickettsia peacockii (strain Rustic), this protein is Serine--tRNA ligase.